We begin with the raw amino-acid sequence, 235 residues long: Glutathione S-transferase 1 (235 aa).

A GST N-terminal domain is found at 36 to 113 (EKYTLTYFNG…LLGGRFGLLG (78 aa)). Residues Y42, W73, K77, V85, and 97–98 (ES) each bind glutathione. One can recognise a GST C-terminal domain in the interval 115–235 (NDWEEAKIMA…WIKKRPKTYF (121 aa)).

This sequence belongs to the GST superfamily. As to quaternary structure, homodimer.

The catalysed reaction is RX + glutathione = an S-substituted glutathione + a halide anion + H(+). This Onchocerca volvulus protein is Glutathione S-transferase 1 (GST1).